A 533-amino-acid chain; its full sequence is CWF19-like protein 1 homolog (533 aa).

The tract at residues 290 to 314 (EMGGAEDGAGNGRKRHNDGGNDGPR) is disordered.

Belongs to the CWF19 family.

The polypeptide is CWF19-like protein 1 homolog (Caenorhabditis elegans).